Reading from the N-terminus, the 287-residue chain is Inactive phospholipid phosphatase 7 (287 aa).

The interval 1–75 (MPANQTRSRA…NNKDKKELPE (75 aa)) is disordered. At 1–120 (MPANQTRSRA…SSSWGSVRSM (120 aa)) the chain is on the cytoplasmic side. Residues 31–40 (SGGGGGGGES) show a composition bias toward gly residues. Residues 49-65 (QRQQQNQQQQGDNPQPE) show a composition bias toward low complexity. A helical transmembrane segment spans residues 121–141 (VKLLALTGHGIPWVFGTIVCL). Topologically, residues 142-146 (MRSNT) are extracellular. A helical transmembrane segment spans residues 147–167 (LAGQEVLVNLLLALLLDVMTV). The Cytoplasmic segment spans residues 168–215 (SGMQKLVKRKGPWEMPPGFFDYLAMDIYSFPAAHASRAVMVSKFLLAH). Residues 216-236 (LVLAVPLRILLVLWAILVGIS) form a helical membrane-spanning segment. Over 237–247 (RVLLGRHHLTD) the chain is Extracellular. Residues 248–268 (VGCGFALGFLHYSLVEMVWLS) traverse the membrane as a helical segment. Residues 269 to 287 (SNTCQTLISIGTFNWSPLY) lie on the Cytoplasmic side of the membrane.

The protein belongs to the PA-phosphatase related phosphoesterase family.

It localises to the nucleus envelope. Its subcellular location is the endoplasmic reticulum membrane. The protein resides in the membrane. Functionally, plays a role as negative regulator of myoblast differentiation, in part through effects on MTOR signaling. Has no detectable enzymatic activity. This chain is Inactive phospholipid phosphatase 7, found in Danio rerio (Zebrafish).